We begin with the raw amino-acid sequence, 186 residues long: Tetratricopeptide repeat protein 36 (186 aa).

TPR repeat units lie at residues 48–81 (SKAL…LPDR), 83–115 (SAYN…SGGR), and 120–153 (RQSF…GSPF).

It belongs to the TTC36 family.

The chain is Tetratricopeptide repeat protein 36 (Ttc36) from Mus musculus (Mouse).